Consider the following 202-residue polypeptide: Dephospho-CoA kinase (202 aa).

Residues 5 to 202 enclose the DPCK domain; the sequence is ILGLTGGIGS…FYLTLRGGQP (198 aa). 13–18 lines the ATP pocket; that stretch reads GSGKSA.

It belongs to the CoaE family.

It localises to the cytoplasm. It catalyses the reaction 3'-dephospho-CoA + ATP = ADP + CoA + H(+). The protein operates within cofactor biosynthesis; coenzyme A biosynthesis; CoA from (R)-pantothenate: step 5/5. Its function is as follows. Catalyzes the phosphorylation of the 3'-hydroxyl group of dephosphocoenzyme A to form coenzyme A. This chain is Dephospho-CoA kinase, found in Stutzerimonas stutzeri (Pseudomonas stutzeri).